We begin with the raw amino-acid sequence, 139 residues long: MAKFLIVEARFYSHLNDMLIQGAKQAIEEAGHECEVITVPGALEIPAAITMASDTGLYDAFVALGVVIRGETYHFEIVASESARGVMALTLDGLVIGNGILTVENEQQALVRADPQQKNKGGDAAKAAITMFNLKKKLS.

Residues F11, 42–44, and 66–68 each bind 5-amino-6-(D-ribitylamino)uracil; these read ALE and VVI. (2S)-2-hydroxy-3-oxobutyl phosphate is bound at residue 71–72; it reads ET. H74 functions as the Proton donor in the catalytic mechanism. N98 lines the 5-amino-6-(D-ribitylamino)uracil pocket. Residue R112 participates in (2S)-2-hydroxy-3-oxobutyl phosphate binding.

The protein belongs to the DMRL synthase family.

It catalyses the reaction (2S)-2-hydroxy-3-oxobutyl phosphate + 5-amino-6-(D-ribitylamino)uracil = 6,7-dimethyl-8-(1-D-ribityl)lumazine + phosphate + 2 H2O + H(+). It participates in cofactor biosynthesis; riboflavin biosynthesis; riboflavin from 2-hydroxy-3-oxobutyl phosphate and 5-amino-6-(D-ribitylamino)uracil: step 1/2. Functionally, catalyzes the formation of 6,7-dimethyl-8-ribityllumazine by condensation of 5-amino-6-(D-ribitylamino)uracil with 3,4-dihydroxy-2-butanone 4-phosphate. This is the penultimate step in the biosynthesis of riboflavin. The protein is 6,7-dimethyl-8-ribityllumazine synthase of Zymomonas mobilis subsp. mobilis (strain ATCC 31821 / ZM4 / CP4).